The sequence spans 98 residues: MTTVGVSLFRRSPEKITMKIAAFLGLSFLLIASYVLICEAQHPGFQELLILEENMRDPENSKERSCAKPRENCNRMNILCCRGECVCPTFGDCFCYGD.

The N-terminal stretch at 1-40 is a signal peptide; sequence MTTVGVSLFRRSPEKITMKIAAFLGLSFLLIASYVLICEA. Residues 41–64 constitute a propeptide that is removed on maturation; sequence QHPGFQELLILEENMRDPENSKER. Cystine bridges form between Cys-66–Cys-81, Cys-73–Cys-85, and Cys-80–Cys-95.

This sequence belongs to the hainantoxin family. 17 subfamily. Expressed by the venom gland.

The protein localises to the secreted. In terms of biological role, putative ion channel inhibitor. This chain is Hainantoxin-XVII.2, found in Cyriopagopus hainanus (Chinese bird spider).